The sequence spans 452 residues: Maltoporin (452 aa).

The signal sequence occupies residues 1 to 25 (MMITLRKLPLAVAVAAGVMSAQAMA).

The protein belongs to the porin LamB (TC 1.B.3) family. As to quaternary structure, homotrimer formed of three 18-stranded antiparallel beta-barrels, containing three independent channels.

It localises to the cell outer membrane. The enzyme catalyses beta-maltose(in) = beta-maltose(out). Involved in the transport of maltose and maltodextrins. The chain is Maltoporin from Salmonella choleraesuis (strain SC-B67).